An 89-amino-acid polypeptide reads, in one-letter code: Large ribosomal subunit protein bL27 (89 aa).

The tract at residues 1–22 (MAHKKAGGSSRNGRDSAGRRLG) is disordered.

This sequence belongs to the bacterial ribosomal protein bL27 family.

In Sphingopyxis alaskensis (strain DSM 13593 / LMG 18877 / RB2256) (Sphingomonas alaskensis), this protein is Large ribosomal subunit protein bL27.